The chain runs to 630 residues: Sodium-dependent serotonin transporter (630 aa).

Over 1-87 the chain is Cytoplasmic; it reads METTPLNSQK…ERETWGKKMD (87 aa). Residues 23–60 are disordered; it reads ENGVLQKGVPTTADRAEPSQISNGYSAVPSTSAGDEAS. A compositionally biased stretch (polar residues) spans 41–55; that stretch reads SQISNGYSAVPSTSA. Tyr-47 is subject to Phosphotyrosine. Residues 88–112 traverse the membrane as a helical segment; it reads FLLSVIGYAVDLGNIWRFPYICYQN. Gly-94, Ala-96, Val-97, Asp-98, and Asn-101 together coordinate Na(+). Residue Asp-98 coordinates serotonin. The Extracellular segment spans residues 113–115; sequence GGG. The chain crosses the membrane as a helical span at residues 116–135; sequence AFLLPYTIMAIFGGIPLFYM. Over 136-160 the chain is Cytoplasmic; sequence ELALGQYHRNGCISIWRKICPIFKG. Tyr-142 is subject to Phosphotyrosine. The helical transmembrane segment at 161–186 threads the bilayer; it reads IGYAICIIAFYIASYYNTIIAWALYY. At 187–252 the chain is on the extracellular side; sequence LISSLTDRLP…KGLQDLGTIS (66 aa). The cysteines at positions 200 and 209 are disulfide-linked. Residues Asn-208 and Asn-217 are each glycosylated (N-linked (GlcNAc...) asparagine). A helical transmembrane segment spans residues 253–271; the sequence is WQLTLCIVLIFTVIYFSIW. The Cytoplasmic segment spans residues 272–277; that stretch reads KGVKTS. Thr-276 carries the post-translational modification Phosphothreonine. The chain crosses the membrane as a helical span at residues 278–297; the sequence is GKVVWVTATFPYIVLSVLLV. Residues 298–324 lie on the Extracellular side of the membrane; the sequence is RGATLPGAWRGVVFYLKPNWQKLLETG. A helical membrane pass occupies residues 325 to 347; the sequence is VWVDAAAQIFFSLGPGFGVLLAF. Ser-336 is a Na(+) binding site. The Cytoplasmic portion of the chain corresponds to 348–360; sequence ASYNKFNNNCYQD. The chain crosses the membrane as a helical span at residues 361 to 380; the sequence is ALVTSVVNCMTSFVSGFVIF. Asn-368 contributes to the Na(+) binding site. Topologically, residues 381 to 421 are extracellular; sequence TVLGYMAEMRNEDVSEVAKDAGPSLLFITYAEAIANMPAST. A helical membrane pass occupies residues 422 to 443; that stretch reads FFAIIFFLMLITLGLDSTFAGL. Positions 434, 437, and 438 each coordinate Na(+). Thr-439 lines the serotonin pocket. Residues 444 to 463 lie on the Cytoplasmic side of the membrane; that stretch reads EGVITAVLDEFPHIWAKRRE. A helical membrane pass occupies residues 464–483; sequence WFVLIVVITCVLGSLLTLTS. The Extracellular portion of the chain corresponds to 484–494; the sequence is GGAYVVTLLEE. Glu-494 and Tyr-495 together coordinate serotonin. The chain crosses the membrane as a helical span at residues 495 to 516; sequence YATGPAVLTVALIEAVAVSWFY. At 517-538 the chain is on the cytoplasmic side; the sequence is GITQFCSDVKEMLGFSPGWFWR. A helical transmembrane segment spans residues 539 to 558; the sequence is ICWVAISPLFLLFIICSFLM. Residues Phe-556 and Ser-559 each coordinate serotonin. Topologically, residues 559 to 574 are extracellular; it reads SPPQLRLFQYNYPHWS. Residues 575 to 595 form a helical membrane-spanning segment; it reads IVLGYCIGMSSVICIPTYIIY. At 596–630 the chain is on the cytoplasmic side; it reads RLISTPGTLKERIIKSITPETPTEIPCGDIRMNAV. Residues 616-624 are interaction with RAB4A; that stretch reads TPTEIPCGD.

Belongs to the sodium:neurotransmitter symporter (SNF) (TC 2.A.22) family. SLC6A4 subfamily. As to quaternary structure, monomer or homooligomer. Interacts with TGFB1I1. Interacts with SEC23A, SEC24C and PATJ. Interacts with NOS1; the interaction may diminish the cell surface localization of SERT in the brain and, correspondingly, reduce serotonin reuptake. Interacts (via C-terminus) with SCAMP2; the interaction is direct and retains transporter molecules intracellularly. Interacts with filamentous actin and STX1A. Interacts (via the N-terminus) with STX1A (via the H3 domain); this interaction regulates SLC4A6 channel conductance. Interacts with ITGAV:ITGB3. Interacts (via C-terminus) with ITGB3; this interaction regulates SLC6A4 trafficking. Post-translationally, phosphorylation at Thr-276 increases 5-HT uptake and is required for cGMP-mediated SERT regulation. In terms of tissue distribution, expressed in the intestinal crypt epithelial cells and myenteric neurons of the small intestine (at protein level). Expressed in the brain.

It localises to the cell membrane. It is found in the endomembrane system. The protein localises to the endosome membrane. Its subcellular location is the synapse. The protein resides in the cell junction. It localises to the focal adhesion. It is found in the cell projection. The protein localises to the neuron projection. The catalysed reaction is serotonin(out) + K(+)(in) + Na(+)(out) + H(+)(in) = serotonin(in) + K(+)(out) + Na(+)(in) + H(+)(out). Its function is as follows. Serotonin transporter that cotransports serotonin with one Na(+) ion in exchange for one K(+) ion and possibly one proton in an overall electroneutral transport cycle. Transports serotonin across the plasma membrane from the extracellular compartment to the cytosol thus limiting serotonin intercellular signaling. Essential for serotonin homeostasis in the central nervous system. In the developing somatosensory cortex, acts in glutamatergic neurons to control serotonin uptake and its trophic functions accounting for proper spatial organization of cortical neurons and elaboration of sensory circuits. In the mature cortex, acts primarily in brainstem raphe neurons to mediate serotonin uptake from the synaptic cleft back into the pre-synaptic terminal thus terminating serotonin signaling at the synapse. Modulates mucosal serotonin levels in the gastrointestinal tract through uptake and clearance of serotonin in enterocytes. Required for enteric neurogenesis and gastrointestinal reflexes. Regulates blood serotonin levels by ensuring rapid high affinity uptake of serotonin from plasma to platelets, where it is further stored in dense granules via vesicular monoamine transporters and then released upon stimulation. Mechanistically, the transport cycle starts with an outward-open conformation having Na1(+) and Cl(-) sites occupied. The binding of a second extracellular Na2(+) ion and serotonin substrate leads to structural changes to outward-occluded to inward-occluded to inward-open, where the Na2(+) ion and serotonin are released into the cytosol. Binding of intracellular K(+) ion induces conformational transitions to inward-occluded to outward-open and completes the cycle by releasing K(+) possibly together with a proton bound to Asp-98 into the extracellular compartment. Na1(+) and Cl(-) ions remain bound throughout the transport cycle. Additionally, displays serotonin-induced channel-like conductance for monovalent cations, mainly Na(+) ions. The channel activity is uncoupled from the transport cycle and may contribute to the membrane resting potential or excitability. This chain is Sodium-dependent serotonin transporter (Slc6a4), found in Rattus norvegicus (Rat).